The following is a 742-amino-acid chain: NAD(P)H-quinone oxidoreductase subunit 5, chloroplastic (742 aa).

16 helical membrane-spanning segments follow: residues 9 to 29 (WIIP…LLLF), 40 to 60 (WSFQ…NLSI), 89 to 109 (IDPL…MVLI), 125 to 145 (FAYM…SNLI), 147 to 167 (IYIF…FWFT), 185 to 205 (GDFG…SFEF), 219 to 239 (NEVN…GAIA), 258 to 278 (TPIS…FLVA), 283 to 303 (LFIV…ITVF), 327 to 347 (LGYM…FHLI), 354 to 374 (ALLF…VGYC), 396 to 416 (NSFL…CFWS), 425 to 445 (WLYS…TAFY), 550 to 570 (LFPI…GIPF), 606 to 626 (FFSV…YKPV), and 722 to 742 (YLFF…FFNV).

The protein belongs to the complex I subunit 5 family. NDH is composed of at least 16 different subunits, 5 of which are encoded in the nucleus.

Its subcellular location is the plastid. The protein localises to the chloroplast thylakoid membrane. It catalyses the reaction a plastoquinone + NADH + (n+1) H(+)(in) = a plastoquinol + NAD(+) + n H(+)(out). It carries out the reaction a plastoquinone + NADPH + (n+1) H(+)(in) = a plastoquinol + NADP(+) + n H(+)(out). Functionally, NDH shuttles electrons from NAD(P)H:plastoquinone, via FMN and iron-sulfur (Fe-S) centers, to quinones in the photosynthetic chain and possibly in a chloroplast respiratory chain. The immediate electron acceptor for the enzyme in this species is believed to be plastoquinone. Couples the redox reaction to proton translocation, and thus conserves the redox energy in a proton gradient. In Lactuca sativa (Garden lettuce), this protein is NAD(P)H-quinone oxidoreductase subunit 5, chloroplastic (ndhF).